The chain runs to 334 residues: MAFNMKNRHLLSLVHHTEREIKYLLDLSRDLKRAKYAGTEQQKLKGKNIALIFEKTSTRTRCAFEVAAYDQGAQVTYIDPNSSQIGHKESMKDTARVLGRMYDGIEYRGFKQSIVQELADYAGVPVFNGLTDEFHPTQMLADVLTMIEHCDKPLSEISYVYIGDARNNMGNSLLLIGAKLGMDVRICAPKALLPEASLVEMCEKFAKESGARITVTEDIDKAVKGVDFVHTDVWVSMGEPLETWGERIKLLLPYQVTPELMKRTGNPKVKFMHCLPAFHNSETKVGRQIAEKYPELANGIEVTEEVFESPMNIAFEQAENRMHTIKAVMVASLA.

Carbamoyl phosphate-binding positions include 57–60 (STRT), Q84, R108, and 135–138 (HPTQ). L-ornithine is bound by residues N168, D232, and 236–237 (SM). Residues 274-275 (CL) and R321 each bind carbamoyl phosphate.

Belongs to the aspartate/ornithine carbamoyltransferase superfamily. OTCase family.

It is found in the cytoplasm. The enzyme catalyses carbamoyl phosphate + L-ornithine = L-citrulline + phosphate + H(+). It participates in amino-acid degradation; L-arginine degradation via ADI pathway; carbamoyl phosphate from L-arginine: step 2/2. In terms of biological role, reversibly catalyzes the transfer of the carbamoyl group from carbamoyl phosphate (CP) to the N(epsilon) atom of ornithine (ORN) to produce L-citrulline. The protein is Ornithine carbamoyltransferase of Haemophilus influenzae (strain PittGG).